The following is a 159-amino-acid chain: UPF0262 protein PHZ_c2197 (159 aa).

The protein belongs to the UPF0262 family.

This Phenylobacterium zucineum (strain HLK1) protein is UPF0262 protein PHZ_c2197.